The primary structure comprises 624 residues: Glutamine--fructose-6-phosphate aminotransferase [isomerizing] (624 aa).

The active-site Nucleophile; for GATase activity is the Cys2. Residues 2 to 226 (CGIVGYVGQQ…QDQAVVLTAD (225 aa)) form the Glutamine amidotransferase type-2 domain. SIS domains lie at 297 to 436 (SDQE…ARGT) and 469 to 614 (LAQR…VDKP). Lys619 functions as the For Fru-6P isomerization activity in the catalytic mechanism.

As to quaternary structure, homodimer.

The protein resides in the cytoplasm. It catalyses the reaction D-fructose 6-phosphate + L-glutamine = D-glucosamine 6-phosphate + L-glutamate. Functionally, catalyzes the first step in hexosamine metabolism, converting fructose-6P into glucosamine-6P using glutamine as a nitrogen source. This Mycolicibacterium paratuberculosis (strain ATCC BAA-968 / K-10) (Mycobacterium paratuberculosis) protein is Glutamine--fructose-6-phosphate aminotransferase [isomerizing].